The chain runs to 328 residues: Mitochondrial GTPase 1 (328 aa).

Residues 23–211 (NKTLKRLKNL…MLDTPGIMTP (189 aa)) enclose the CP-type G domain. Residues 70 to 73 (NKCD), 155 to 160 (NTGKSS), and Gly207 each bind GTP.

It belongs to the TRAFAC class YlqF/YawG GTPase family. MTG1 subfamily.

The protein resides in the mitochondrion inner membrane. Its function is as follows. Mitochondrial GTPase involved in assembly of the large ribosomal subunit. Plays a role in expression of the mitochondrial translational machinery. This is Mitochondrial GTPase 1 (mtg1) from Schizosaccharomyces pombe (strain 972 / ATCC 24843) (Fission yeast).